The following is an 889-amino-acid chain: Alanine--tRNA ligase (889 aa).

Zn(2+)-binding residues include H564, H568, C671, and H675.

Belongs to the class-II aminoacyl-tRNA synthetase family. Zn(2+) serves as cofactor.

The protein localises to the cytoplasm. The catalysed reaction is tRNA(Ala) + L-alanine + ATP = L-alanyl-tRNA(Ala) + AMP + diphosphate. In terms of biological role, catalyzes the attachment of alanine to tRNA(Ala) in a two-step reaction: alanine is first activated by ATP to form Ala-AMP and then transferred to the acceptor end of tRNA(Ala). Also edits incorrectly charged Ser-tRNA(Ala) and Gly-tRNA(Ala) via its editing domain. The protein is Alanine--tRNA ligase of Pelagibacter ubique (strain HTCC1062).